We begin with the raw amino-acid sequence, 142 residues long: Alpha-lactalbumin (142 aa).

The signal sequence occupies residues 1 to 19 (MMSFVSLLLVGILFHATQA). The 123-residue stretch at 20-142 (EQLTKCEVFQ…KLDQWLCEKL (123 aa)) folds into the C-type lysozyme domain. 4 disulfide bridges follow: Cys25–Cys139, Cys47–Cys130, Cys80–Cys96, and Cys92–Cys110. 2 N-linked (GlcNAc...) asparagine glycosylation sites follow: Asn64 and Asn93. Lys98, Asp101, Asp103, Asp106, and Asp107 together coordinate Ca(2+).

The protein belongs to the glycosyl hydrolase 22 family. Lactose synthase (LS) is a heterodimer of a catalytic component, beta1,4-galactosyltransferase (beta4Gal-T1) and a regulatory component, alpha-lactalbumin (LA). As to expression, mammary gland specific. Secreted in milk.

It is found in the secreted. Its function is as follows. Regulatory subunit of lactose synthase, changes the substrate specificity of galactosyltransferase in the mammary gland making glucose a good acceptor substrate for this enzyme. This enables LS to synthesize lactose, the major carbohydrate component of milk. In other tissues, galactosyltransferase transfers galactose onto the N-acetylglucosamine of the oligosaccharide chains in glycoproteins. In Capra hircus (Goat), this protein is Alpha-lactalbumin (LALBA).